We begin with the raw amino-acid sequence, 470 residues long: MNPNQKIITIGSASLGLVFLNVILHVVSITVTVLVLSNNVTGPNCNGTIIREYNGTVRIERITQWYNTNIIEYIERPSNEYYMSNTEPLCEAQGFAPFSKDNGIRIGSKGHVFVIREPFVSCSPLECRTFFLTQGSLLNDKHSNGTVKDRSPYRTLMSVEVGQSPNVYQARFEAVAWSATACHDGKKWMTVGVTGPDAQAVAVVHYGGVPVDVINSWAGNILRTQESSCTCIKGDCYWVMTDGPANRQAQYKIFKAKDGRIIGQTDVNFNGGHIEECSCYPNEGKVECVCRDNWTGTNRPVLVISPDLSYTVGYLCAGIPTDTPRGEDSQFTGSCTKPLGNQGYGIKGFGFRQGNDVWAGRTISRTSRSGFEIIKIRNGWTQNSKDQIRKQVIVDNLNWSGYSGSFTLPVELTKKGCLVPCFWVEMIRGKPEEITIWTSSSSIVMCGVDHKVASWSWHDGAILPFDIDKM.

Residues 1–14 (MNPNQKIITIGSAS) are Intravirion-facing. The segment at 11–32 (GSASLGLVFLNVILHVVSITVT) is involved in apical transport and lipid raft association. The chain crosses the membrane as a helical span at residues 15-35 (LGLVFLNVILHVVSITVTVLV). The segment at 32 to 86 (TVLVLSNNVTGPNCNGTIIREYNGTVRIERITQWYNTNIIEYIERPSNEYYMSNT) is hypervariable stalk region. Residues 36–470 (LSNNVTGPNC…AILPFDIDKM (435 aa)) are Virion surface-facing. 3 N-linked (GlcNAc...) asparagine; by host glycosylation sites follow: Asn39, Asn46, and Asn54. Residues 89–470 (LCEAQGFAPF…AILPFDIDKM (382 aa)) are head of neuraminidase. 8 cysteine pairs are disulfide-bonded: Cys90–Cys417, Cys122–Cys127, Cys182–Cys229, Cys231–Cys236, Cys277–Cys290, Cys279–Cys288, Cys316–Cys335, and Cys421–Cys446. Arg116 is a binding site for substrate. Asn144 is a glycosylation site (N-linked (GlcNAc...) asparagine; by host). The active-site Proton donor/acceptor is Asp149. Position 150 (Arg150) interacts with substrate. 275–276 (EE) is a substrate binding site. Arg291 contributes to the substrate binding site. A Ca(2+)-binding site is contributed by Asp292. An N-linked (GlcNAc...) asparagine; by host glycan is attached at Asn293. Ca(2+)-binding residues include Gly296 and Asp322. Residue Arg368 coordinates substrate. The N-linked (GlcNAc...) asparagine; by host glycan is linked to Asn398. Catalysis depends on Tyr402, which acts as the Nucleophile.

This sequence belongs to the glycosyl hydrolase 34 family. In terms of assembly, homotetramer. Ca(2+) serves as cofactor. Post-translationally, N-glycosylated.

It is found in the virion membrane. Its subcellular location is the host apical cell membrane. The catalysed reaction is Hydrolysis of alpha-(2-&gt;3)-, alpha-(2-&gt;6)-, alpha-(2-&gt;8)- glycosidic linkages of terminal sialic acid residues in oligosaccharides, glycoproteins, glycolipids, colominic acid and synthetic substrates.. Inhibited by the neuraminidase inhibitors zanamivir (Relenza) and oseltamivir (Tamiflu). These drugs interfere with the release of progeny virus from infected cells and are effective against all influenza strains. Resistance to neuraminidase inhibitors is quite rare. Catalyzes the removal of terminal sialic acid residues from viral and cellular glycoconjugates. Cleaves off the terminal sialic acids on the glycosylated HA during virus budding to facilitate virus release. Additionally helps virus spread through the circulation by further removing sialic acids from the cell surface. These cleavages prevent self-aggregation and ensure the efficient spread of the progeny virus from cell to cell. Otherwise, infection would be limited to one round of replication. Described as a receptor-destroying enzyme because it cleaves a terminal sialic acid from the cellular receptors. May facilitate viral invasion of the upper airways by cleaving the sialic acid moieties on the mucin of the airway epithelial cells. Likely to plays a role in the budding process through its association with lipid rafts during intracellular transport. May additionally display a raft-association independent effect on budding. Plays a role in the determination of host range restriction on replication and virulence. Sialidase activity in late endosome/lysosome traffic seems to enhance virus replication. This is Neuraminidase from Aves (Horse).